The sequence spans 144 residues: Large ribosomal subunit protein uL13 (144 aa).

Belongs to the universal ribosomal protein uL13 family. Part of the 50S ribosomal subunit.

This protein is one of the early assembly proteins of the 50S ribosomal subunit, although it is not seen to bind rRNA by itself. It is important during the early stages of 50S assembly. This chain is Large ribosomal subunit protein uL13, found in Blochmanniella pennsylvanica (strain BPEN).